We begin with the raw amino-acid sequence, 408 residues long: Na(+)-translocating NADH-quinone reductase subunit F (408 aa).

Residues 4–24 (IYLGVGMFTIIVLVLVAIIMF) traverse the membrane as a helical segment. The 95-residue stretch at 33 to 127 (GDVEILINDD…DMEIELPEEV (95 aa)) folds into the 2Fe-2S ferredoxin-type domain. The [2Fe-2S] cluster site is built by C70, C76, C79, and C111. Positions 130–270 (IRKWDCTVKS…SGPFGEFFAK (141 aa)) constitute an FAD-binding FR-type domain.

The protein belongs to the NqrF family. In terms of assembly, composed of six subunits; NqrA, NqrB, NqrC, NqrD, NqrE and NqrF. [2Fe-2S] cluster serves as cofactor. It depends on FAD as a cofactor.

The protein resides in the cell inner membrane. It carries out the reaction a ubiquinone + n Na(+)(in) + NADH + H(+) = a ubiquinol + n Na(+)(out) + NAD(+). In terms of biological role, NQR complex catalyzes the reduction of ubiquinone-1 to ubiquinol by two successive reactions, coupled with the transport of Na(+) ions from the cytoplasm to the periplasm. The first step is catalyzed by NqrF, which accepts electrons from NADH and reduces ubiquinone-1 to ubisemiquinone by a one-electron transfer pathway. The protein is Na(+)-translocating NADH-quinone reductase subunit F of Idiomarina loihiensis (strain ATCC BAA-735 / DSM 15497 / L2-TR).